The following is a 245-amino-acid chain: Probable phosphatase KPN78578_10290 (245 aa).

Positions 7, 9, 15, 40, 73, 101, 131, 192, and 194 each coordinate Zn(2+).

This sequence belongs to the PHP family. As to quaternary structure, homotrimer. The cofactor is Zn(2+).

This Klebsiella pneumoniae subsp. pneumoniae (strain ATCC 700721 / MGH 78578) protein is Probable phosphatase KPN78578_10290.